A 316-amino-acid chain; its full sequence is Secondary metabolism regulator laeA (316 aa).

The protein belongs to the methyltransferase superfamily. LaeA methyltransferase family. In terms of assembly, component of the heterotrimeric velvet complex composed of laeA, veA and velB; VeA acting as a bridging protein between laeA and velB.

The protein resides in the nucleus. It catalyses the reaction L-methionyl-[protein] + S-adenosyl-L-methionine = S-methyl-L-methionyl-[protein] + S-adenosyl-L-homocysteine. In terms of biological role, methyltransferase that performs automethylation. No other methyl-accepting substrate has been identified yet. Component of the velvet transcription factor complex that acts as a global regulator for secondary metabolite gene expression. Controls the biosynthetic gene cluster for beauvericin, a depsipeptide mycotoxin that functions as a virulence determinant. The velvet complex also regulates chromatin structure and transcription of siderophore biosynthetic genes and is required for infection of tomato plants. The velvet complex also governs expression of nitrate metabolism genes. The chain is Secondary metabolism regulator laeA from Fusarium oxysporum f. sp. lycopersici (strain 4287 / CBS 123668 / FGSC 9935 / NRRL 34936) (Fusarium vascular wilt of tomato).